Consider the following 346-residue polypeptide: D-fructose 1,6-bisphosphatase class 2/sedoheptulose 1,7-bisphosphatase 1 (346 aa).

Mn(2+) is bound by residues aspartate 33, glutamate 57, aspartate 97, and glutamate 100. Residues 100–102, tyrosine 131, 176–178, and 198–200 contribute to the substrate site; these read EGT, RAR, and DGD. Glutamate 225 lines the Mn(2+) pocket.

This sequence belongs to the FBPase class 2 family. As to quaternary structure, homotetramer. Mn(2+) serves as cofactor.

The enzyme catalyses beta-D-fructose 1,6-bisphosphate + H2O = beta-D-fructose 6-phosphate + phosphate. The catalysed reaction is D-sedoheptulose 1,7-bisphosphate + H2O = D-sedoheptulose 7-phosphate + phosphate. It participates in carbohydrate biosynthesis; Calvin cycle. Catalyzes the hydrolysis of fructose 1,6-bisphosphate (Fru 1,6-P2) and sedoheptulose 1,7-bisphosphate (Sed 1,7-P2) to fructose 6-phosphate and sedoheptulose 7-phosphate, respectively. The protein is D-fructose 1,6-bisphosphatase class 2/sedoheptulose 1,7-bisphosphatase 1 of Acaryochloris marina (strain MBIC 11017).